A 234-amino-acid chain; its full sequence is Ubiquitin domain-containing protein 1 (234 aa).

A disordered region spans residues 1-47 (MGGCVGTHHDSSGSLNENSDGTGVALGRNQPLKKDKPKWKSDYPMTD). The segment covering 12–21 (SGSLNENSDG) has biased composition (polar residues). Residues 32–41 (LKKDKPKWKS) are compositionally biased toward basic and acidic residues. Positions 152–227 (CQLRLRLSTG…VQVIVSQPIP (76 aa)) constitute a Ubiquitin-like domain.

In terms of biological role, may be involved in the regulation of cellular senescence through a positive feedback loop with TP53. The sequence is that of Ubiquitin domain-containing protein 1 (ubtd1) from Xenopus laevis (African clawed frog).